The following is a 479-amino-acid chain: MNRNPDQNTFPNITLKIIETYLGRVPSVNEYHMLKLQARNIQKITVFNKDIFVSLVKKNKKRFFSDVDTSASEIKDRILSYFSKQTQTYNIGKLFTIIELQSVLVTTYTDILGVLTIKAPNVISSKISYNVTSMEELARDMLNSMNVAVIDKAKVMGRHNVSSLVKNVNKLMEEYLRRHNKSCICYGSYSLYLINPNIRYGDIDILQTNSRTFLIDLAFLIKFITGNNIILSKIPYLRNYMVIKDENDNHIIDSFNIRQDTMNVVPKIFIDNIYIVDPTFQLLNMIKMFSQIDRLEDLSKDPEKFNARMATMLEYVRYTHGIVFDGKRNNMPMKCIIDENNRIVTVTTKDYFSFKKCLVYLDENVLSSDILDLNADTSCDFESVTNSVYLIHDNIMYTYFSNTILLSDKGKVHEISARGLCAHILLYQMLTSGEYKQCLSDLLNSMMNRDKIPIYSHTERDKKPGRHGFINIEKDIIVF.

Catalysis depends on residues Asp202 and Asp204. Ca(2+) is bound by residues Asp202, Asp204, and Asp253.

Belongs to the poxviridae poly(A) polymerase catalytic subunit family. Heterodimer of a large (catalytic) subunit and a small (regulatory) subunit.

It catalyses the reaction RNA(n) + ATP = RNA(n)-3'-adenine ribonucleotide + diphosphate. In terms of biological role, polymerase that creates the 3'-poly(A) tail of mRNA's. The chain is Poly(A) polymerase catalytic subunit (OPG063) from Homo sapiens (Human).